The following is a 572-amino-acid chain: Phenylalanine--tRNA ligase beta subunit (572 aa).

Residues 278 to 353 (LTPKEFEVEF…IAYGYNEIKP (76 aa)) form the B5 domain. Residues D331, D337, E340, and D341 each coordinate Mg(2+).

This sequence belongs to the phenylalanyl-tRNA synthetase beta subunit family. Type 2 subfamily. In terms of assembly, tetramer of two alpha and two beta subunits. Requires Mg(2+) as cofactor.

The protein localises to the cytoplasm. The catalysed reaction is tRNA(Phe) + L-phenylalanine + ATP = L-phenylalanyl-tRNA(Phe) + AMP + diphosphate + H(+). This is Phenylalanine--tRNA ligase beta subunit from Thermococcus onnurineus (strain NA1).